The sequence spans 393 residues: Acetylornithine aminotransferase (393 aa).

Pyridoxal 5'-phosphate contacts are provided by residues 100–101 and Phe133; that span reads GA. Arg136 contacts N(2)-acetyl-L-ornithine. Position 218–221 (218–221) interacts with pyridoxal 5'-phosphate; it reads DEVQ. At Lys247 the chain carries N6-(pyridoxal phosphate)lysine. Ser274 contacts N(2)-acetyl-L-ornithine. Position 275 (Thr275) interacts with pyridoxal 5'-phosphate.

The protein belongs to the class-III pyridoxal-phosphate-dependent aminotransferase family. ArgD subfamily. As to quaternary structure, homodimer. Pyridoxal 5'-phosphate serves as cofactor.

The protein resides in the cytoplasm. It carries out the reaction N(2)-acetyl-L-ornithine + 2-oxoglutarate = N-acetyl-L-glutamate 5-semialdehyde + L-glutamate. Its pathway is amino-acid biosynthesis; L-arginine biosynthesis; N(2)-acetyl-L-ornithine from L-glutamate: step 4/4. The polypeptide is Acetylornithine aminotransferase (Caldanaerobacter subterraneus subsp. tengcongensis (strain DSM 15242 / JCM 11007 / NBRC 100824 / MB4) (Thermoanaerobacter tengcongensis)).